Consider the following 811-residue polypeptide: Transmembrane protease serine 6 (811 aa).

Positions 1-48 are disordered; that stretch reads MPRCFQLPCSTRMPTTEVPQAADGQGDAGDGEEAAEPEGKFKPPKNTK. Residues 1-59 lie on the Cytoplasmic side of the membrane; that stretch reads MPRCFQLPCSTRMPTTEVPQAADGQGDAGDGEEAAEPEGKFKPPKNTKRKNRDYVRFTP. The span at 8–18 shows a compositional bias: polar residues; sequence PCSTRMPTTEV. Residues 60 to 80 form a helical; Signal-anchor for type II membrane protein membrane-spanning segment; it reads LLLVLAALVSAGVMLWYFLGY. The Extracellular segment spans residues 81-811; it reads KAEVTVSQVY…VINWIQQVLT (731 aa). The SEA domain occupies 86-209; that stretch reads VSQVYSGSLR…EGLVILEASV (124 aa). N-linked (GlcNAc...) asparagine glycosylation is found at N138, N184, N216, N338, N433, and N453. 2 consecutive CUB domains span residues 213-336 and 323-440; these read VVLN…QDCQ and FLLS…QISL. C335 and C366 are disulfide-bonded. LDL-receptor class A domains are found at residues 445-477, 478-514, and 518-555; these read VQVY…CDGI, KDCP…DRQP, and NGSD…DGQS. 10 disulfide bridges follow: C458/C470, C464/C480, C474/C489, C491/C503, C497/C516, C510/C525, C531/C543, C538/C557, C551/C566, and C602/C618. The N-linked (GlcNAc...) asparagine glycan is linked to N518. The 235-residue stretch at 577 to 811 folds into the Peptidase S1 domain; sequence IVGGTVSSEG…VINWIQQVLT (235 aa). Residues H617 and D668 each act as charge relay system in the active site. Disulfide bonds link C702–C768, C733–C747, and C758–C787. S762 serves as the catalytic Charge relay system.

The protein belongs to the peptidase S1 family. In terms of assembly, interacts with HJV. Post-translationally, the single-chain zymogen undergoes autoproteolytic processing. This results in TMPRSS6 shedding from the cell surface and conversion into an activated two-chains form which is released extracellularly. The process involves a trans-activation mechanism that requires TMPRSS6 oligomerization. As to expression, expressed at highest levels in adult mice liver, kidney and uterus. Also strongly expressed within the nasal cavity by olfactory epithelial cells. A weak, but detectable, signal in adult mice tissues analyzed including brain, lung, heart, kidney, spleen, muscle, intestine, thymus and pancreas. No signal in residual embryonic yolk sac, developing kidney tubules or in embryonic tissues analyzed including lung, heart, gastrointestinal tract and epithelium of the oral cavity.

Its subcellular location is the cell membrane. Membrane-bound serine protease. Through the cleavage of cell surface HJV, a regulator of the expression of the iron absorption-regulating hormone hepicidin/HAMP, plays a role in iron homeostasis. This is Transmembrane protease serine 6 (Tmprss6) from Mus musculus (Mouse).